Here is a 419-residue protein sequence, read N- to C-terminus: UDP-N-acetylglucosamine 1-carboxyvinyltransferase 2 (419 aa).

Lys24–Asn25 provides a ligand contact to phosphoenolpyruvate. A UDP-N-acetyl-alpha-D-glucosamine-binding site is contributed by Arg94. Catalysis depends on Cys118, which acts as the Proton donor. Cys118 carries the post-translational modification 2-(S-cysteinyl)pyruvic acid O-phosphothioketal. UDP-N-acetyl-alpha-D-glucosamine-binding positions include Arg123–Gln127, Asp307, and Ile329.

The protein belongs to the EPSP synthase family. MurA subfamily.

The protein resides in the cytoplasm. The enzyme catalyses phosphoenolpyruvate + UDP-N-acetyl-alpha-D-glucosamine = UDP-N-acetyl-3-O-(1-carboxyvinyl)-alpha-D-glucosamine + phosphate. The protein operates within cell wall biogenesis; peptidoglycan biosynthesis. Cell wall formation. Adds enolpyruvyl to UDP-N-acetylglucosamine. This is UDP-N-acetylglucosamine 1-carboxyvinyltransferase 2 from Staphylococcus epidermidis (strain ATCC 12228 / FDA PCI 1200).